Consider the following 78-residue polypeptide: RNA-binding protein Hfq (78 aa).

The region spanning 10–69 is the Sm domain; that stretch reads DPFLNALRKEHVPVSIYLVNGIKLQGHIESFDQYVVLLRNTVTQMVYKHAISTVVPARAV.

This sequence belongs to the Hfq family. Homohexamer.

In terms of biological role, RNA chaperone that binds small regulatory RNA (sRNAs) and mRNAs to facilitate mRNA translational regulation in response to envelope stress, environmental stress and changes in metabolite concentrations. Also binds with high specificity to tRNAs. In Janthinobacterium sp. (strain Marseille) (Minibacterium massiliensis), this protein is RNA-binding protein Hfq.